Consider the following 196-residue polypeptide: Peptide deformylase (196 aa).

Positions 103 and 145 each coordinate Fe cation. The active site involves Glu146. A Fe cation-binding site is contributed by His149.

It belongs to the polypeptide deformylase family. Fe(2+) is required as a cofactor.

It catalyses the reaction N-terminal N-formyl-L-methionyl-[peptide] + H2O = N-terminal L-methionyl-[peptide] + formate. Functionally, removes the formyl group from the N-terminal Met of newly synthesized proteins. Requires at least a dipeptide for an efficient rate of reaction. N-terminal L-methionine is a prerequisite for activity but the enzyme has broad specificity at other positions. This is Peptide deformylase from Rhodococcus opacus (strain B4).